We begin with the raw amino-acid sequence, 218 residues long: Putative transposase InsD for insertion element IS2E (218 aa).

One can recognise an Integrase catalytic domain in the interval 23–206 (KPAVPPSKRA…SPREYLRQRA (184 aa)).

Its function is as follows. Involved in the transposition of the insertion sequence IS2. This chain is Putative transposase InsD for insertion element IS2E (insD8), found in Escherichia coli (strain K12).